We begin with the raw amino-acid sequence, 487 residues long: Glutamyl-tRNA(Gln) amidotransferase subunit A (487 aa).

Residues lysine 80 and serine 155 each act as charge relay system in the active site. Catalysis depends on serine 179, which acts as the Acyl-ester intermediate.

The protein belongs to the amidase family. GatA subfamily. In terms of assembly, heterotrimer of A, B and C subunits.

It carries out the reaction L-glutamyl-tRNA(Gln) + L-glutamine + ATP + H2O = L-glutaminyl-tRNA(Gln) + L-glutamate + ADP + phosphate + H(+). Allows the formation of correctly charged Gln-tRNA(Gln) through the transamidation of misacylated Glu-tRNA(Gln) in organisms which lack glutaminyl-tRNA synthetase. The reaction takes place in the presence of glutamine and ATP through an activated gamma-phospho-Glu-tRNA(Gln). This chain is Glutamyl-tRNA(Gln) amidotransferase subunit A, found in Leptospira interrogans serogroup Icterohaemorrhagiae serovar Lai (strain 56601).